The primary structure comprises 241 residues: Uridylate kinase (241 aa).

ATP contacts are provided by residues 15-18 (KLSG), Gly-58, and Arg-62. Residues Asp-77 and 138-145 (TGNPYFTT) each bind UMP. ATP is bound by residues Thr-165, Tyr-171, and Asp-174.

The protein belongs to the UMP kinase family. In terms of assembly, homohexamer.

It localises to the cytoplasm. It carries out the reaction UMP + ATP = UDP + ADP. The protein operates within pyrimidine metabolism; CTP biosynthesis via de novo pathway; UDP from UMP (UMPK route): step 1/1. With respect to regulation, inhibited by UTP. Catalyzes the reversible phosphorylation of UMP to UDP. This Desulfotalea psychrophila (strain LSv54 / DSM 12343) protein is Uridylate kinase.